A 462-amino-acid polypeptide reads, in one-letter code: Cathepsin F (462 aa).

A signal peptide spans 1-19 (MAPLLQLLWLLTLLSTVAL). Residues 20–248 (SPVPAKPWAD…MSPAKSINDL (229 aa)) constitute a propeptide, activation peptide. N-linked (GlcNAc...) asparagine glycosylation is found at Asn-35, Asn-138, and Asn-173. 2 disulfides stabilise this stretch: Cys-270/Cys-311 and Cys-304/Cys-344. The active site involves Cys-273. Asn-345 and Asn-356 each carry an N-linked (GlcNAc...) asparagine glycan. Residues Cys-402 and Cys-450 are joined by a disulfide bond. His-409 is an active-site residue. Asn-418 carries an N-linked (GlcNAc...) asparagine glycan. Asn-429 is a catalytic residue.

This sequence belongs to the peptidase C1 family.

The protein localises to the lysosome. It catalyses the reaction The recombinant enzyme cleaves synthetic substrates with Phe and Leu (better than Val) in P2, with high specificity constant (kcat/Km) comparable to that of cathepsin L.. Its function is as follows. Thiol protease which is believed to participate in intracellular degradation and turnover of proteins. Has also been implicated in tumor invasion and metastasis. This is Cathepsin F (Ctsf) from Mus musculus (Mouse).